The chain runs to 93 residues: Alpha-defensin 16 (93 aa).

The N-terminal stretch at 1-19 (MKTLILLSALVLLAFQVQA) is a signal peptide. The propeptide occupies 20–58 (DPIQNTDEETKTEEQPGEEDQAVSVSFGDPEGTSLQEES). A disordered region spans residues 22 to 54 (IQNTDEETKTEEQPGEEDQAVSVSFGDPEGTSL). Cystine bridges form between Cys-64-Cys-92, Cys-66-Cys-81, and Cys-71-Cys-91.

This sequence belongs to the alpha-defensin family. Paneth cells of the small bowel.

The protein resides in the secreted. Probably contributes to the antimicrobial barrier function of the small bowel mucosa. This Mus musculus (Mouse) protein is Alpha-defensin 16 (Defa16).